The chain runs to 106 residues: UPF0145 protein TM_0763 (106 aa).

Belongs to the UPF0145 family.

This chain is UPF0145 protein TM_0763, found in Thermotoga maritima (strain ATCC 43589 / DSM 3109 / JCM 10099 / NBRC 100826 / MSB8).